Here is a 215-residue protein sequence, read N- to C-terminus: Holliday junction branch migration complex subunit RuvA (215 aa).

The tract at residues 1–67 is domain I; it reads MIGWLQGERI…DDGSTLFGFC (67 aa). Positions 68-146 are domain II; the sequence is DQQERDLFRT…NWAPLQEPSL (79 aa). The segment at 147 to 158 is flexible linker; that stretch reads SLVDRSDVKAIP. The tract at residues 159-215 is domain III; the sequence is LGEPCLRDLQITLETLGYEDLEIRRAMRAVASGPDVPAEDDGDAWLRASLKWLSQSA.

This sequence belongs to the RuvA family. As to quaternary structure, homotetramer. Forms an RuvA(8)-RuvB(12)-Holliday junction (HJ) complex. HJ DNA is sandwiched between 2 RuvA tetramers; dsDNA enters through RuvA and exits via RuvB. An RuvB hexamer assembles on each DNA strand where it exits the tetramer. Each RuvB hexamer is contacted by two RuvA subunits (via domain III) on 2 adjacent RuvB subunits; this complex drives branch migration. In the full resolvosome a probable DNA-RuvA(4)-RuvB(12)-RuvC(2) complex forms which resolves the HJ.

It localises to the cytoplasm. The RuvA-RuvB-RuvC complex processes Holliday junction (HJ) DNA during genetic recombination and DNA repair, while the RuvA-RuvB complex plays an important role in the rescue of blocked DNA replication forks via replication fork reversal (RFR). RuvA specifically binds to HJ cruciform DNA, conferring on it an open structure. The RuvB hexamer acts as an ATP-dependent pump, pulling dsDNA into and through the RuvAB complex. HJ branch migration allows RuvC to scan DNA until it finds its consensus sequence, where it cleaves and resolves the cruciform DNA. In Synechococcus sp. (strain WH7803), this protein is Holliday junction branch migration complex subunit RuvA.